Consider the following 276-residue polypeptide: 4-deoxy-L-threo-5-hexosulose-uronate ketol-isomerase (276 aa).

Residues His-194, His-196, Glu-201, and His-243 each coordinate Zn(2+).

The protein belongs to the KduI family. Zn(2+) serves as cofactor.

The catalysed reaction is 5-dehydro-4-deoxy-D-glucuronate = 3-deoxy-D-glycero-2,5-hexodiulosonate. It functions in the pathway glycan metabolism; pectin degradation; 2-dehydro-3-deoxy-D-gluconate from pectin: step 4/5. In terms of biological role, catalyzes the isomerization of 5-dehydro-4-deoxy-D-glucuronate to 3-deoxy-D-glycero-2,5-hexodiulosonate. This is 4-deoxy-L-threo-5-hexosulose-uronate ketol-isomerase from Shouchella clausii (strain KSM-K16) (Alkalihalobacillus clausii).